We begin with the raw amino-acid sequence, 800 residues long: Mitochondrial intermediate peptidase (800 aa).

The N-terminal 23 residues, 1–23, are a transit peptide targeting the mitochondrion; that stretch reads MAGHMLMPLRRRPWTCRACLQRL. Positions 27-41 are enriched in polar residues; it reads RRSLETAASPSSQSD. The interval 27–59 is disordered; that stretch reads RRSLETAASPSSQSDVYDYAPTNHSTQKKSNDE. Zn(2+) is bound at residue histidine 563. Residue glutamate 564 is part of the active site. Zn(2+) is bound by residues histidine 567 and histidine 570.

Belongs to the peptidase M3 family. Zn(2+) is required as a cofactor.

The protein localises to the mitochondrion matrix. It catalyses the reaction Release of an N-terminal octapeptide as second stage of processing of some proteins imported into the mitochondrion.. Functionally, cleaves proteins, imported into the mitochondrion, to their mature size. While most mitochondrial precursor proteins are processed to the mature form in one step by mitochondrial processing peptidase (MPP), the sequential cleavage by MIP of an octapeptide after initial processing by MPP is a required step for a subgroup of nuclear-encoded precursor proteins destined for the matrix or the inner membrane. The protein is Mitochondrial intermediate peptidase (oct1) of Aspergillus oryzae (strain ATCC 42149 / RIB 40) (Yellow koji mold).